The sequence spans 635 residues: Threonine--tRNA ligase (635 aa).

The region spanning 1–61 (MISIRLKDGS…KEDGCLELLD (61 aa)) is the TGS domain. Residues 242 to 532 (DHRRLGRELG…LTEHFGGAFP (291 aa)) are catalytic. 3 residues coordinate Zn(2+): Cys-333, His-384, and His-509.

It belongs to the class-II aminoacyl-tRNA synthetase family. As to quaternary structure, homodimer. Requires Zn(2+) as cofactor.

The protein resides in the cytoplasm. The catalysed reaction is tRNA(Thr) + L-threonine + ATP = L-threonyl-tRNA(Thr) + AMP + diphosphate + H(+). Functionally, catalyzes the attachment of threonine to tRNA(Thr) in a two-step reaction: L-threonine is first activated by ATP to form Thr-AMP and then transferred to the acceptor end of tRNA(Thr). Also edits incorrectly charged L-seryl-tRNA(Thr). The chain is Threonine--tRNA ligase from Syntrophomonas wolfei subsp. wolfei (strain DSM 2245B / Goettingen).